A 201-amino-acid polypeptide reads, in one-letter code: 3-isopropylmalate dehydratase small subunit (201 aa).

It belongs to the LeuD family. LeuD type 1 subfamily. As to quaternary structure, heterodimer of LeuC and LeuD.

The enzyme catalyses (2R,3S)-3-isopropylmalate = (2S)-2-isopropylmalate. Its pathway is amino-acid biosynthesis; L-leucine biosynthesis; L-leucine from 3-methyl-2-oxobutanoate: step 2/4. Functionally, catalyzes the isomerization between 2-isopropylmalate and 3-isopropylmalate, via the formation of 2-isopropylmaleate. This chain is 3-isopropylmalate dehydratase small subunit, found in Escherichia coli O45:K1 (strain S88 / ExPEC).